The following is a 145-amino-acid chain: Probable thioredoxin-2 (145 aa).

The Thioredoxin domain occupies 39–144 (VFDIDSVEDF…LDDFIEDVLA (106 aa)). Residues cysteine 68 and cysteine 71 each act as nucleophile in the active site. A disulfide bridge connects residues cysteine 68 and cysteine 71.

It belongs to the thioredoxin family.

Its function is as follows. Participates in various redox reactions through the reversible oxidation of its active center dithiol to a disulfide and catalyzes dithiol-disulfide exchange reactions. The sequence is that of Probable thioredoxin-2 (trx-2) from Caenorhabditis elegans.